A 116-amino-acid polypeptide reads, in one-letter code: Iron-sulfur cluster insertion protein ErpA (116 aa).

The iron-sulfur cluster site is built by C44, C108, and C110.

This sequence belongs to the HesB/IscA family. As to quaternary structure, homodimer. It depends on iron-sulfur cluster as a cofactor.

Functionally, required for insertion of 4Fe-4S clusters for at least IspG. The polypeptide is Iron-sulfur cluster insertion protein ErpA (Pseudomonas aeruginosa (strain LESB58)).